We begin with the raw amino-acid sequence, 516 residues long: Extracellular endo-inulinase inuB (516 aa).

The first 25 residues, 1–25 (MLNPKVAYMVWMTCLGLTLPSQAQS), serve as a signal peptide directing secretion. Substrate-binding positions include 40–43 (WMNE), glutamine 59, tryptophan 67, and 99–100 (FT). Glutamate 43 is a catalytic residue. A glycan (N-linked (GlcNAc...) asparagine) is linked at asparagine 109. Substrate-binding positions include 175–176 (RD) and glutamate 233. N-linked (GlcNAc...) asparagine glycosylation is found at asparagine 372, asparagine 419, and asparagine 424.

The protein belongs to the glycosyl hydrolase 32 family.

It localises to the secreted. The enzyme catalyses Endohydrolysis of (2-&gt;1)-beta-D-fructosidic linkages in inulin.. Endo-inulinase involved in utilization of the plant storage polymer inulin, consisting of fructooligosaccharides with a degree of polymerization (DP) value from 2 to 60. In Aspergillus niger, this protein is Extracellular endo-inulinase inuB (inuB).